The sequence spans 335 residues: Ketol-acid reductoisomerase (NADP(+)) (335 aa).

One can recognise a KARI N-terminal Rossmann domain in the interval 5–185; sequence SKIYTDKDSN…GATRAGVIPT (181 aa). NADP(+) contacts are provided by residues 28–31, serine 56, and 86–89; these read YGSQ and DMVQ. Residue histidine 111 is part of the active site. Glycine 137 contacts NADP(+). The KARI C-terminal knotted domain maps to 186-331; that stretch reads TFKEETETDL…NQLKDLIQKG (146 aa). Aspartate 194, glutamate 198, glutamate 230, and glutamate 234 together coordinate Mg(2+). Serine 255 contributes to the substrate binding site.

Belongs to the ketol-acid reductoisomerase family. Mg(2+) is required as a cofactor.

The enzyme catalyses (2R)-2,3-dihydroxy-3-methylbutanoate + NADP(+) = (2S)-2-acetolactate + NADPH + H(+). The catalysed reaction is (2R,3R)-2,3-dihydroxy-3-methylpentanoate + NADP(+) = (S)-2-ethyl-2-hydroxy-3-oxobutanoate + NADPH + H(+). It functions in the pathway amino-acid biosynthesis; L-isoleucine biosynthesis; L-isoleucine from 2-oxobutanoate: step 2/4. Its pathway is amino-acid biosynthesis; L-valine biosynthesis; L-valine from pyruvate: step 2/4. Involved in the biosynthesis of branched-chain amino acids (BCAA). Catalyzes an alkyl-migration followed by a ketol-acid reduction of (S)-2-acetolactate (S2AL) to yield (R)-2,3-dihydroxy-isovalerate. In the isomerase reaction, S2AL is rearranged via a Mg-dependent methyl migration to produce 3-hydroxy-3-methyl-2-ketobutyrate (HMKB). In the reductase reaction, this 2-ketoacid undergoes a metal-dependent reduction by NADPH to yield (R)-2,3-dihydroxy-isovalerate. This is Ketol-acid reductoisomerase (NADP(+)) from Saccharolobus islandicus (strain L.S.2.15 / Lassen #1) (Sulfolobus islandicus).